The following is a 294-amino-acid chain: Probable 3-hydroxyisobutyrate dehydrogenase (294 aa).

NAD(+) is bound by residues 3-31 and threonine 93; that span reads TIAF…RGFD. The active site involves lysine 168. Residue lysine 243 coordinates NAD(+).

The protein belongs to the HIBADH-related family.

It carries out the reaction 3-hydroxy-2-methylpropanoate + NAD(+) = 2-methyl-3-oxopropanoate + NADH + H(+). Its pathway is amino-acid degradation; L-valine degradation. The sequence is that of Probable 3-hydroxyisobutyrate dehydrogenase (mmsB) from Mycobacterium bovis (strain ATCC BAA-935 / AF2122/97).